The sequence spans 321 residues: 26S proteasome non-ATPase regulatory subunit 7 (321 aa).

One can recognise an MPN domain in the interval 9-144 (VVVHPLVLLS…TEAYISVEEV (136 aa)). A Glycyl lysine isopeptide (Lys-Gly) (interchain with G-Cter in ubiquitin) cross-link involves residue Lys-180. N6-acetyllysine is present on residues Lys-204, Lys-214, Lys-313, and Lys-314. Positions 281–321 (ANRDAEKKEGQEKEESKKERKDDKEKEKSDAAKKEEKKEKK) are disordered.

This sequence belongs to the peptidase M67A family. In terms of assembly, component of the 19S proteasome regulatory particle complex. The 26S proteasome consists of a 20S core particle (CP) and two 19S regulatory subunits (RP). The regulatory particle is made of a lid composed of 9 subunits including PSMD7, a base containing 6 ATPases and few additional components. Within the complex, PSMD7 interacts with subunit PSMD4 through their respective MPN domain. Interacts with TRIM5.

Component of the 26S proteasome, a multiprotein complex involved in the ATP-dependent degradation of ubiquitinated proteins. This complex plays a key role in the maintenance of protein homeostasis by removing misfolded or damaged proteins, which could impair cellular functions, and by removing proteins whose functions are no longer required. Therefore, the proteasome participates in numerous cellular processes, including cell cycle progression, apoptosis, or DNA damage repair. The protein is 26S proteasome non-ATPase regulatory subunit 7 (Psmd7) of Mus musculus (Mouse).